The chain runs to 404 residues: Biflaviolin synthase CYP158A2 (404 aa).

Arg288 and Leu293 together coordinate flaviolin. Cys353 serves as a coordination point for heme.

This sequence belongs to the cytochrome P450 family. Heme is required as a cofactor.

It carries out the reaction 2 flaviolin + 2 reduced [2Fe-2S]-[ferredoxin] + O2 + H(+) = 3,3'-biflaviolin + 2 oxidized [2Fe-2S]-[ferredoxin] + 2 H2O. The enzyme catalyses 2 flaviolin + 2 reduced [2Fe-2S]-[ferredoxin] + O2 + H(+) = 3,8'-biflaviolin + 2 oxidized [2Fe-2S]-[ferredoxin] + 2 H2O. It participates in pigment biosynthesis. In terms of biological role, catalyzes oxidative C-C coupling reaction to polymerize flaviolin and form highly conjugated pigments which protect the soil bacterium from deleterious effects of UV irradiation (three isomers of biflaviolin and one triflaviolin). In Streptomyces coelicolor (strain ATCC BAA-471 / A3(2) / M145), this protein is Biflaviolin synthase CYP158A2.